Here is a 63-residue protein sequence, read N- to C-terminus: U-reduvitoxin-Pr9a (63 aa).

The N-terminal stretch at 1–19 is a signal peptide; sequence MRFFSLFTFLVAFIAAALA. Residues 20-42 constitute a propeptide that is removed on maturation; it reads APVEIGEDLFALRPTGAKRDIIL. Cys-47 and Cys-60 are oxidised to a cystine.

Expressed by the venom gland.

Its subcellular location is the secreted. The sequence is that of U-reduvitoxin-Pr9a from Platymeris rhadamanthus (Red spot assassin bug).